The primary structure comprises 204 residues: Outer-membrane lipoprotein LolB (204 aa).

An N-terminal signal peptide occupies residues 1 to 20 (MLRSRRLALLCLATPLWLAA). Cysteine 21 carries the N-palmitoyl cysteine lipid modification. A lipid anchor (S-diacylglycerol cysteine) is attached at cysteine 21. Residues 131 to 150 (GRAAPGTPSNVTRDANGRPD) form a disordered region.

Belongs to the LolB family. Monomer.

It localises to the cell outer membrane. Its function is as follows. Plays a critical role in the incorporation of lipoproteins in the outer membrane after they are released by the LolA protein. This is Outer-membrane lipoprotein LolB from Cupriavidus metallidurans (strain ATCC 43123 / DSM 2839 / NBRC 102507 / CH34) (Ralstonia metallidurans).